The following is a 129-amino-acid chain: Glycine cleavage system H protein (129 aa).

One can recognise a Lipoyl-binding domain in the interval Ser24–Glu106. At Lys65 the chain carries N6-lipoyllysine.

The protein belongs to the GcvH family. In terms of assembly, the glycine cleavage system is composed of four proteins: P, T, L and H. The cofactor is (R)-lipoate.

Functionally, the glycine cleavage system catalyzes the degradation of glycine. The H protein shuttles the methylamine group of glycine from the P protein to the T protein. This Myxococcus xanthus (strain DK1622) protein is Glycine cleavage system H protein.